Consider the following 428-residue polypeptide: Serine--tRNA ligase (428 aa).

235–237 (TAE) contacts L-serine. Residue 266–268 (RSE) coordinates ATP. Residue E289 coordinates L-serine. 353 to 356 (EISS) is an ATP binding site. Residue S389 coordinates L-serine.

It belongs to the class-II aminoacyl-tRNA synthetase family. Type-1 seryl-tRNA synthetase subfamily. As to quaternary structure, homodimer. The tRNA molecule binds across the dimer.

The protein resides in the cytoplasm. It catalyses the reaction tRNA(Ser) + L-serine + ATP = L-seryl-tRNA(Ser) + AMP + diphosphate + H(+). It carries out the reaction tRNA(Sec) + L-serine + ATP = L-seryl-tRNA(Sec) + AMP + diphosphate + H(+). The protein operates within aminoacyl-tRNA biosynthesis; selenocysteinyl-tRNA(Sec) biosynthesis; L-seryl-tRNA(Sec) from L-serine and tRNA(Sec): step 1/1. Its function is as follows. Catalyzes the attachment of serine to tRNA(Ser). Is also able to aminoacylate tRNA(Sec) with serine, to form the misacylated tRNA L-seryl-tRNA(Sec), which will be further converted into selenocysteinyl-tRNA(Sec). The chain is Serine--tRNA ligase from Shewanella amazonensis (strain ATCC BAA-1098 / SB2B).